The chain runs to 262 residues: Large ribosomal subunit protein uL10m (262 aa).

A mitochondrion-targeting transit peptide spans 1 to 28 (MAAAVAGILRGGLPPRAAWLPTLQTVRH). The disordered stretch occupies residues 243-262 (GDCATSANEKLHPPDPAPDA).

It belongs to the universal ribosomal protein uL10 family. In terms of assembly, component of the mitochondrial ribosome large subunit (39S) which comprises a 16S rRNA and about 50 distinct proteins.

It is found in the mitochondrion. The protein is Large ribosomal subunit protein uL10m (Mrpl10) of Mus musculus (Mouse).